A 275-amino-acid polypeptide reads, in one-letter code: Urease accessory protein UreD (275 aa).

The protein belongs to the UreD family. UreD, UreF and UreG form a complex that acts as a GTP-hydrolysis-dependent molecular chaperone, activating the urease apoprotein by helping to assemble the nickel containing metallocenter of UreC. The UreE protein probably delivers the nickel.

Its subcellular location is the cytoplasm. In terms of biological role, required for maturation of urease via the functional incorporation of the urease nickel metallocenter. The chain is Urease accessory protein UreD from Cereibacter sphaeroides (strain ATCC 17025 / ATH 2.4.3) (Rhodobacter sphaeroides).